A 286-amino-acid polypeptide reads, in one-letter code: 33 kDa chaperonin (286 aa).

2 disulfide bridges follow: Cys-225/Cys-227 and Cys-258/Cys-261.

This sequence belongs to the HSP33 family. Under oxidizing conditions two disulfide bonds are formed involving the reactive cysteines. Under reducing conditions zinc is bound to the reactive cysteines and the protein is inactive.

The protein resides in the cytoplasm. Redox regulated molecular chaperone. Protects both thermally unfolding and oxidatively damaged proteins from irreversible aggregation. Plays an important role in the bacterial defense system toward oxidative stress. The polypeptide is 33 kDa chaperonin (Shewanella putrefaciens (strain CN-32 / ATCC BAA-453)).